Reading from the N-terminus, the 372-residue chain is Tyrosine--tRNA ligase 1 (372 aa).

Residues Tyr37, Tyr169, Gln173, Asp176, and Gln191 each coordinate L-tyrosine. Positions 246–250 match the 'KMSKS' region motif; the sequence is KMSKS. Position 249 (Lys249) interacts with ATP.

This sequence belongs to the class-I aminoacyl-tRNA synthetase family. TyrS type 4 subfamily. In terms of assembly, homodimer.

The protein localises to the cytoplasm. It catalyses the reaction tRNA(Tyr) + L-tyrosine + ATP = L-tyrosyl-tRNA(Tyr) + AMP + diphosphate + H(+). In terms of biological role, catalyzes the attachment of tyrosine to tRNA(Tyr) in a two-step reaction: tyrosine is first activated by ATP to form Tyr-AMP and then transferred to the acceptor end of tRNA(Tyr). This chain is Tyrosine--tRNA ligase 1, found in Pyrobaculum aerophilum (strain ATCC 51768 / DSM 7523 / JCM 9630 / CIP 104966 / NBRC 100827 / IM2).